The sequence spans 505 residues: Xylose import ATP-binding protein XylG (505 aa).

2 ABC transporter domains span residues 6–243 (LEMR…VGRE) and 262–505 (VKNY…TGGK). 38-45 (GENGAGKS) contributes to the ATP binding site.

The protein belongs to the ABC transporter superfamily. Xylose importer (TC 3.A.1.2.4) family. As to quaternary structure, the complex is composed of two ATP-binding proteins (XylG), two transmembrane proteins (XylH) and a solute-binding protein (XylF).

It localises to the cell membrane. It carries out the reaction D-xylose(out) + ATP + H2O = D-xylose(in) + ADP + phosphate + H(+). Its function is as follows. Part of the ABC transporter complex XylFGH involved in xylose import. Responsible for energy coupling to the transport system. In Thermoanaerobacter pseudethanolicus (strain ATCC 33223 / 39E) (Clostridium thermohydrosulfuricum), this protein is Xylose import ATP-binding protein XylG.